Reading from the N-terminus, the 107-residue chain is Flagellar hook-basal body complex protein FliE (107 aa).

This sequence belongs to the FliE family.

Its subcellular location is the bacterial flagellum basal body. In Sodalis glossinidius (strain morsitans), this protein is Flagellar hook-basal body complex protein FliE.